The sequence spans 437 residues: Beta-1,3-galactosyl-O-glycosyl-glycoprotein beta-1,6-N-acetylglucosaminyltransferase 3 (437 aa).

Residues 1 to 12 lie on the Cytoplasmic side of the membrane; sequence MTSWQRLCWHYR. The helical; Signal-anchor for type II membrane protein transmembrane segment at 13–30 threads the bilayer; that stretch reads LWTLGCYMLLAILALKLS. Residues 31–437 are Lumenal-facing; the sequence is LRLKCDFDAM…RHKAIYGTEL (407 aa). Intrachain disulfides connect Cys-70–Cys-227, Cys-161–Cys-381, Cys-182–Cys-209, and Cys-390–Cys-422. Residue Asn-288 is glycosylated (N-linked (GlcNAc...) asparagine).

The protein belongs to the glycosyltransferase 14 family. Post-translationally, N-glycosylated.

It localises to the golgi apparatus membrane. It carries out the reaction a 3-O-[beta-D-galactosyl-(1-&gt;3)-N-acetyl-alpha-D-galactosaminyl]-L-seryl-[protein] + UDP-N-acetyl-alpha-D-glucosamine = 3-O-{beta-D-galactosyl-(1-&gt;3)-[N-acetyl-beta-D-glucosaminyl-(1-&gt;6)]-N-acetyl-alpha-D-galactosaminyl}-L-seryl-[protein] + UDP + H(+). The catalysed reaction is a 3-O-[beta-D-galactosyl-(1-&gt;3)-N-acetyl-alpha-D-galactosaminyl]-L-threonyl-[protein] + UDP-N-acetyl-alpha-D-glucosamine = a 3-O-{beta-D-galactosyl-(1-&gt;3)-[N-acetyl-beta-D-glucosaminyl-(1-&gt;6)]-N-acetyl-alpha-D-galactosaminyl}-L-threonyl-[protein] + UDP + H(+). The enzyme catalyses a beta-D-Gal-(1-&gt;4)-beta-D-GlcNAc-(1-&gt;3)-beta-D-Gal-(1-&gt;4)-beta-D-GlcNAc derivative + UDP-N-acetyl-alpha-D-glucosamine = a beta-D-Gal-(1-&gt;4)-beta-D-GlcNAc-(1-&gt;3)-[beta-D-GlcNAc-(1-&gt;6)]-beta-D-Gal-(1-&gt;4)-N-acetyl-beta-D-glucosaminyl derivative + UDP + H(+). It catalyses the reaction 3-O-[N-acetyl-beta-D-glucosaminyl-(1-&gt;3)-N-acetyl-alpha-D-galactosaminyl]-L-seryl-[protein] + UDP-N-acetyl-alpha-D-glucosamine = 3-O-[N-acetyl-beta-D-glucosaminyl-(1-&gt;3)-[N-acetyl-beta-D-glucosaminyl-(1-&gt;6)]-N-acetyl-alpha-D-galactosaminyl]-L-seryl-[protein] + UDP + H(+). It carries out the reaction a 3-O-[N-acetyl-beta-D-glucosaminyl-(1-&gt;3)-N-acetyl-alpha-D-galactosaminyl]-L-threonyl-[protein] + UDP-N-acetyl-alpha-D-glucosamine = 3-O-[N-acetyl-beta-D-glucosaminyl-(1-&gt;3)-[N-acetyl-beta-D-glucosaminyl-(1-&gt;6)]-N-acetyl-alpha-D-galactosaminyl]-L-threonyl-[protein] + UDP + H(+). It functions in the pathway protein modification; protein glycosylation. In terms of biological role, glycosyltransferase that can synthesize all known mucin beta 6 N-acetylglucosaminides. Mediates core 2 and core 4 O-glycan branching, 2 important steps in mucin-type biosynthesis. Also has I-branching enzyme activity by converting linear into branched poly-N-acetyllactosaminoglycans, leading to introduce the blood group I antigen during embryonic development. The protein is Beta-1,3-galactosyl-O-glycosyl-glycoprotein beta-1,6-N-acetylglucosaminyltransferase 3 (Gcnt3) of Mus musculus (Mouse).